Reading from the N-terminus, the 1075-residue chain is mRNA-binding protein PUF2 (1075 aa).

Positions 38–68 (NTNARSVRVSDKRGRSSSTSPQKIGSYRTRA) are disordered. Residue Ser-72 is modified to Phosphoserine. Low complexity predominate over residues 93–105 (TPVVVVPPTSSTP). Residues 93–112 (TPVVVVPPTSSTPDSLNSTT) form a disordered region. The residue at position 198 (Ser-198) is a Phosphoserine. The 87-residue stretch at 316 to 402 (NTISISNVFP…APSTVSFARV (87 aa)) folds into the RRM domain. The PUM-HD domain maps to 511 to 872 (ELNHLLQNAL…QLLEEVGLSS (362 aa)). Pumilio repeat units lie at residues 574-611 (AIVM…IMLR), 612-647 (KCNK…NLVT), 649-683 (GVSD…FIFE), 684-719 (SVLS…QLLT), 722-758 (SLII…LILC), and 760-800 (KLVN…KIIH). 2 positions are modified to phosphoserine: Ser-872 and Ser-876. Disordered stretches follow at residues 874-931 (GISP…LNFN) and 997-1075 (NNYN…SYGY). Low complexity-rich tracts occupy residues 901-916 (VSVS…HNSV), 997-1009 (NNYN…SQMN), and 1018-1063 (NNNN…NNNN).

The protein localises to the cytoplasm. In terms of biological role, RNA-binding protein involved in post-transcriptional regulation. Negatively regulates expression of COX17 by binding to the 3'-UTR of COX17 mRNA. Promotes decay of COX17 mRNA by enhancing its rate of deadenylation and subsequent turnover. Predominantly binds to mRNAs encoding membrane-associated proteins with roles in transmembrane transport and vesicular trafficking. In Saccharomyces cerevisiae (strain ATCC 204508 / S288c) (Baker's yeast), this protein is mRNA-binding protein PUF2 (PUF2).